Here is a 360-residue protein sequence, read N- to C-terminus: Peptide chain release factor 1 (360 aa).

Q235 is subject to N5-methylglutamine.

It belongs to the prokaryotic/mitochondrial release factor family. Post-translationally, methylated by PrmC. Methylation increases the termination efficiency of RF1.

The protein localises to the cytoplasm. In terms of biological role, peptide chain release factor 1 directs the termination of translation in response to the peptide chain termination codons UAG and UAA. The chain is Peptide chain release factor 1 from Paraburkholderia phymatum (strain DSM 17167 / CIP 108236 / LMG 21445 / STM815) (Burkholderia phymatum).